A 302-amino-acid polypeptide reads, in one-letter code: uncharacterized protein (302 aa).

This is an uncharacterized protein from Schizosaccharomyces pombe (strain 972 / ATCC 24843) (Fission yeast).